A 270-amino-acid chain; its full sequence is 3-phenylpropionate-dihydrodiol/cinnamic acid-dihydrodiol dehydrogenase (270 aa).

10 to 34 is a binding site for NAD(+); the sequence is FITGGGSGLGLALVERFIEEGAQVA. S143 is a substrate binding site. The active-site Proton acceptor is the Y156.

The protein belongs to the short-chain dehydrogenases/reductases (SDR) family.

The enzyme catalyses 3-(cis-5,6-dihydroxycyclohexa-1,3-dien-1-yl)propanoate + NAD(+) = 3-(2,3-dihydroxyphenyl)propanoate + NADH + H(+). It catalyses the reaction (2E)-3-(cis-5,6-dihydroxycyclohexa-1,3-dien-1-yl)prop-2-enoate + NAD(+) = (2E)-3-(2,3-dihydroxyphenyl)prop-2-enoate + NADH + H(+). The protein operates within aromatic compound metabolism; 3-phenylpropanoate degradation. In terms of biological role, converts 3-phenylpropionate-dihydrodiol (PP-dihydrodiol) and cinnamic acid-dihydrodiol (CI-dihydrodiol) into 3-(2,3-dihydroxylphenyl)propanoic acid (DHPP) and 2,3-dihydroxicinnamic acid (DHCI), respectively. In Escherichia coli (strain K12 / MC4100 / BW2952), this protein is 3-phenylpropionate-dihydrodiol/cinnamic acid-dihydrodiol dehydrogenase.